A 286-amino-acid chain; its full sequence is Translocon-associated protein subunit alpha (286 aa).

Positions 1 to 18 (MRLLPRLLLLLLLVFPAT) are cleaved as a signal peptide. At 19–207 (VLFRGGPRGL…EREDGLDGET (189 aa)) the chain is on the lumenal side. Residues 39-75 (EETVEDSIIEDEDDEAEVEEDEPTDLVEDKEEEDVSG) show a composition bias toward acidic residues. The interval 39–83 (EETVEDSIIEDEDDEAEVEEDEPTDLVEDKEEEDVSGEPEASPSA) is disordered. N-linked (GlcNAc...) asparagine glycans are attached at residues asparagine 136 and asparagine 191. A helical membrane pass occupies residues 208–228 (IFMYMFLAGLGLLVIVGLHQL). Residues 229–286 (LESRKRKRPIQKVEMGTSSQNDVDMSWIPQETLNQINKASPRRLPRKRAQKRSVGSDE) are Cytoplasmic-facing. Serine 247 bears the Phosphoserine mark. Threonine 260 is modified (phosphothreonine). Residues 261-286 (LNQINKASPRRLPRKRAQKRSVGSDE) are disordered. Serine 268 bears the Phosphoserine mark. Basic residues predominate over residues 268-279 (SPRRLPRKRAQK).

This sequence belongs to the TRAP-alpha family. Heterotetramer of TRAP-alpha, TRAP-beta, TRAP-delta and TRAP-gamma. Interacts with palmitoylated calnexin (CALX), the interaction is required for efficient folding of glycosylated proteins.

Its subcellular location is the endoplasmic reticulum membrane. Its function is as follows. TRAP proteins are part of a complex whose function is to bind calcium to the ER membrane and thereby regulate the retention of ER resident proteins. May be involved in the recycling of the translocation apparatus after completion of the translocation process or may function as a membrane-bound chaperone facilitating folding of translocated proteins. In Homo sapiens (Human), this protein is Translocon-associated protein subunit alpha (SSR1).